The primary structure comprises 78 residues: Large ribosomal subunit protein bL28 (78 aa).

Residues 1 to 33 (MARKDDVTGEGPVTGNSVSDSNQKTNRRFKRNL) form a disordered region. Residues 14 to 24 (TGNSVSDSNQK) are compositionally biased toward polar residues.

This sequence belongs to the bacterial ribosomal protein bL28 family.

The polypeptide is Large ribosomal subunit protein bL28 (Salinibacter ruber (strain DSM 13855 / M31)).